The chain runs to 329 residues: Beta-ketoacyl-[acyl-carrier-protein] synthase III (329 aa).

Active-site residues include cysteine 113 and histidine 255. The segment at 256–260 (QANQR) is ACP-binding. Asparagine 285 is an active-site residue.

Belongs to the thiolase-like superfamily. FabH family. As to quaternary structure, homodimer.

Its subcellular location is the cytoplasm. It carries out the reaction malonyl-[ACP] + acetyl-CoA + H(+) = 3-oxobutanoyl-[ACP] + CO2 + CoA. Its pathway is lipid metabolism; fatty acid biosynthesis. In terms of biological role, catalyzes the condensation reaction of fatty acid synthesis by the addition to an acyl acceptor of two carbons from malonyl-ACP. Catalyzes the first condensation reaction which initiates fatty acid synthesis and may therefore play a role in governing the total rate of fatty acid production. Possesses both acetoacetyl-ACP synthase and acetyl transacylase activities. Its substrate specificity determines the biosynthesis of branched-chain and/or straight-chain of fatty acids. The sequence is that of Beta-ketoacyl-[acyl-carrier-protein] synthase III from Chlorobium chlorochromatii (strain CaD3).